The sequence spans 727 residues: Transcription activator of gluconeogenesis TRV_01442 (727 aa).

The segment covering 1-32 has biased composition (polar residues); that stretch reads MSPHQTTGQESDNMTVNGENAQASSQYIQSNE. The interval 1–62 is disordered; sequence MSPHQTTGQE…PSRPKRKKAK (62 aa). The span at 39 to 55 shows a compositional bias: basic and acidic residues; sequence ATEKKASAAKAAKDPSR. A DNA-binding region (zn(2)-C6 fungal-type) is located at residues 65–93; that stretch reads CYACQRGHLTCGDERPCQRCIKRGFQDAC. Composition is skewed to polar residues over residues 129–213, 267–277, and 361–379; these read NNVN…TPSA, PSDSGAQRGSI, and MMTTSSATFEDTTNSGAFN. Disordered regions lie at residues 129–224, 264–297, 353–399, 533–567, and 627–666; these read NNVN…FNST, DTPPSDSGAQRGSIGQNGSGTFGLTGSSFSESPS, SPAS…STPQ, NHNVNTGGSSGLMTGSTSRGSYTPRPYSSEVYNSS, and GSNGEADAGLNGEATSNETNELNGSHTNGATTNGRGQRRW. Low complexity-rich tracts occupy residues 380–399 and 543–553; these read SRQNVPVSQQRQQPVVSTPQ and GLMTGSTSRGS. Residues 639 to 661 show a composition bias toward polar residues; sequence EATSNETNELNGSHTNGATTNGR.

It belongs to the ERT1/acuK family.

The protein resides in the nucleus. In terms of biological role, transcription factor which regulates nonfermentable carbon utilization. Activator of gluconeogenetic genes. This Trichophyton verrucosum (strain HKI 0517) protein is Transcription activator of gluconeogenesis TRV_01442.